Consider the following 261-residue polypeptide: Cytochrome c oxidase subunit 3 (261 aa).

The Mitochondrial matrix segment spans residues 1–15; it reads MTHQTHAYHMVNPSP. A helical transmembrane segment spans residues 16-33; that stretch reads WPLTGAFSALLLTSGLVM. Topologically, residues 34 to 38 are mitochondrial intermembrane; the sequence is WFHYN. The chain crosses the membrane as a helical span at residues 39–62; that stretch reads SITLLTLGLLTNILTMYQWWRDVI. At 63-77 the chain is on the mitochondrial matrix side; that stretch reads REGTYQGHHTPIVQK. Residues 78-99 form a helical membrane-spanning segment; that stretch reads GLRYGMILFIVSEVFFFAGFFW. Residues 100-129 are Mitochondrial intermembrane-facing; that stretch reads AFYHSSLVPTHDLGGCWPPTGISPLNPLEV. Residues 130 to 150 traverse the membrane as a helical segment; it reads PLLNTSVLLASGVSITWAHHS. Topologically, residues 151–156 are mitochondrial matrix; sequence LMEGKR. The chain crosses the membrane as a helical span at residues 157–178; it reads NHMNQALLITIMLGLYFTILQA. The Mitochondrial intermembrane portion of the chain corresponds to 179–198; it reads SEYFETSFSISDGIYGSTFF. The helical transmembrane segment at 199–224 threads the bilayer; sequence MATGFHGLHVIIGSTFLIVCLLRQLK. Residues 225 to 232 are Mitochondrial matrix-facing; that stretch reads FHFTSKHH. A helical transmembrane segment spans residues 233–255; it reads FGFEAAAWYWHFVDVVWLFLYVS. Residues 256–261 are Mitochondrial intermembrane-facing; sequence IYWWGS.

Belongs to the cytochrome c oxidase subunit 3 family. In terms of assembly, component of the cytochrome c oxidase (complex IV, CIV), a multisubunit enzyme composed of 14 subunits. The complex is composed of a catalytic core of 3 subunits MT-CO1, MT-CO2 and MT-CO3, encoded in the mitochondrial DNA, and 11 supernumerary subunits COX4I, COX5A, COX5B, COX6A, COX6B, COX6C, COX7A, COX7B, COX7C, COX8 and NDUFA4, which are encoded in the nuclear genome. The complex exists as a monomer or a dimer and forms supercomplexes (SCs) in the inner mitochondrial membrane with NADH-ubiquinone oxidoreductase (complex I, CI) and ubiquinol-cytochrome c oxidoreductase (cytochrome b-c1 complex, complex III, CIII), resulting in different assemblies (supercomplex SCI(1)III(2)IV(1) and megacomplex MCI(2)III(2)IV(2)).

It localises to the mitochondrion inner membrane. The enzyme catalyses 4 Fe(II)-[cytochrome c] + O2 + 8 H(+)(in) = 4 Fe(III)-[cytochrome c] + 2 H2O + 4 H(+)(out). In terms of biological role, component of the cytochrome c oxidase, the last enzyme in the mitochondrial electron transport chain which drives oxidative phosphorylation. The respiratory chain contains 3 multisubunit complexes succinate dehydrogenase (complex II, CII), ubiquinol-cytochrome c oxidoreductase (cytochrome b-c1 complex, complex III, CIII) and cytochrome c oxidase (complex IV, CIV), that cooperate to transfer electrons derived from NADH and succinate to molecular oxygen, creating an electrochemical gradient over the inner membrane that drives transmembrane transport and the ATP synthase. Cytochrome c oxidase is the component of the respiratory chain that catalyzes the reduction of oxygen to water. Electrons originating from reduced cytochrome c in the intermembrane space (IMS) are transferred via the dinuclear copper A center (CU(A)) of subunit 2 and heme A of subunit 1 to the active site in subunit 1, a binuclear center (BNC) formed by heme A3 and copper B (CU(B)). The BNC reduces molecular oxygen to 2 water molecules using 4 electrons from cytochrome c in the IMS and 4 protons from the mitochondrial matrix. This chain is Cytochrome c oxidase subunit 3 (mt-Co3), found in Mus musculus (Mouse).